We begin with the raw amino-acid sequence, 346 residues long: L-glyceraldehyde 3-phosphate reductase (346 aa).

The NADP(+) site is built by W33, D61, Y66, S168, Q193, T223, L225, Q227, K233, S303, Q307, and N311.

It belongs to the shaker potassium channel beta subunit family.

The catalysed reaction is a primary alcohol + NADP(+) = an aldehyde + NADPH + H(+). Aldo-keto reductase that catalyzes the stereospecific, NADPH-dependent reduction of L-glyceraldehyde 3-phosphate (L-GAP) to L-glycerol 3-phosphate (L-G3P). The sequence is that of L-glyceraldehyde 3-phosphate reductase from Escherichia coli O157:H7.